We begin with the raw amino-acid sequence, 843 residues long: Aminopeptidase N (843 aa).

Substrate contacts are provided by residues Glu-120 and 252–256 (GAMEN). A Zn(2+)-binding site is contributed by His-288. Catalysis depends on Glu-289, which acts as the Proton acceptor. Residues His-292 and Glu-311 each coordinate Zn(2+).

It belongs to the peptidase M1 family. As to quaternary structure, monomer. Requires Zn(2+) as cofactor.

It localises to the cytoplasm. The enzyme catalyses Release of an N-terminal amino acid, Xaa-|-Yaa- from a peptide, amide or arylamide. Xaa is preferably Ala, but may be most amino acids including Pro (slow action). When a terminal hydrophobic residue is followed by a prolyl residue, the two may be released as an intact Xaa-Pro dipeptide.. Its function is as follows. Aminopeptidase with broad substrate specificity to several peptides. In Lactobacillus delbrueckii subsp. lactis, this protein is Aminopeptidase N (pepN).